The chain runs to 652 residues: Cleavage and polyadenylation specificity factor subunit 6 (652 aa).

The disordered stretch occupies residues 20-85; the sequence is QAQDEFGGDG…GVYHQSSGSL (66 aa). The RRM domain maps to 93-173; the sequence is YQLYVGNLTW…QAPVVTYPSK (81 aa). Disordered stretches follow at residues 184–440 and 518–652; these read KTRP…QQMG and SYNR…RSRH. Residues 187 to 203 are compositionally biased toward pro residues; sequence PVPPPQQNGPPRGPAPP. The segment covering 205 to 223 has biased composition (gly residues); that stretch reads MGGGPMPTGHPGGPQGGGP. Pro residues-rich tracts occupy residues 256–266, 295–307, and 338–352; these read SGPPRMQPPMH, GPRPGPPNGPPQR, and PQGPPRGLPPAPGPG. A compositionally biased stretch (low complexity) spans 391–406; that stretch reads PGMNMPPQQGMNMTPQ. Over residues 420–435 the composition is skewed to pro residues; that stretch reads GPWPPPQGKPPGPFPD. The span at 518–528 shows a compositional bias: basic and acidic residues; the sequence is SYNRRERSRSR. The segment covering 529 to 538 has biased composition (basic residues); sequence ERSHRSRQRR. Over residues 539–590 the composition is skewed to basic and acidic residues; it reads ERSTSRYRERSRERERDRDRERERDGGSYRERSRSRERERQAPDHYRDDSRS. Residue serine 596 is modified to Phosphoserine. A compositionally biased stretch (low complexity) spans 598-610; it reads EPVVAEAAEAPSS. Residues 612 to 652 show a composition bias toward basic and acidic residues; the sequence is RYYEDRERYRSSDRERRDRDRDRDRERERDRDRREEHRSRH.

The protein belongs to the RRM CPSF6/7 family.

The protein localises to the nucleus. In terms of biological role, may play a role in pre-mRNA 3'-processing. This chain is Cleavage and polyadenylation specificity factor subunit 6, found in Drosophila melanogaster (Fruit fly).